A 130-amino-acid polypeptide reads, in one-letter code: MAVSYNYGTGRRKTAVARVFIKPGSGNIVVNGKPVDEFFSRETGRMIVRQPLVLTENDSRFDIMVNVTGGGESGQAGAVRHGITRALIEYDAELKPVLRKAGFVTRDAREVERKKVGFRKARRRKQFSKR.

The protein belongs to the universal ribosomal protein uS9 family.

In Aromatoleum aromaticum (strain DSM 19018 / LMG 30748 / EbN1) (Azoarcus sp. (strain EbN1)), this protein is Small ribosomal subunit protein uS9.